A 38-amino-acid polypeptide reads, in one-letter code: Toxin BmK NSPK (38 aa).

Cystine bridges form between Cys-7–Cys-27, Cys-13–Cys-32, and Cys-17–Cys-34.

Expressed by the venom gland.

The protein resides in the secreted. Its function is as follows. Blocks voltage-gated potassium (Kv) channel and augments neurite extension via NGF/TrkA signaling pathway. The sequence is that of Toxin BmK NSPK from Olivierus martensii (Manchurian scorpion).